The following is a 311-amino-acid chain: Triacylglycerol lipase (311 aa).

The first 26 residues, Met-1 to Ala-26, serve as a signal peptide directing secretion. The AB hydrolase-1 domain maps to Pro-35 to Glu-280. Met-42 is a binding site for substrate. Ser-108 (nucleophile) is an active-site residue. Residue His-109 participates in substrate binding. Cys-209 and Cys-261 are disulfide-bonded. Asp-235 contributes to the Ca(2+) binding site. Catalysis depends on charge relay system residues Asp-255 and His-277. Ca(2+)-binding residues include Asp-279, Gln-283, and Leu-287.

This sequence belongs to the AB hydrolase superfamily. Pseudomonas lipase family. As to quaternary structure, monomer. Requires Ca(2+) as cofactor.

It is found in the secreted. It catalyses the reaction a triacylglycerol + H2O = a diacylglycerol + a fatty acid + H(+). Catalyzes the hydrolysis of triacylglycerol. Also able to catalyze, in anhydrous organic solvents, intramolecular transesterification of omega-hydroxyfatty acid esters to form macrocyclic lactones. This biosynthesis is dependent on the chain length of the substrates, and the formation of monomer lactone is maximum with methyl 18-hydroxyoctadecanoate. With shorter substrates, monomer lactone decreases and the formation of diolide (dimer lactone) increases. This is Triacylglycerol lipase from Pseudomonas sp. (strain 109).